The primary structure comprises 189 residues: Peptidyl-tRNA hydrolase (189 aa).

Residue tyrosine 15 participates in tRNA binding. The active-site Proton acceptor is the histidine 20. Phenylalanine 66, asparagine 68, and asparagine 114 together coordinate tRNA.

It belongs to the PTH family. In terms of assembly, monomer.

It localises to the cytoplasm. The catalysed reaction is an N-acyl-L-alpha-aminoacyl-tRNA + H2O = an N-acyl-L-amino acid + a tRNA + H(+). Hydrolyzes ribosome-free peptidyl-tRNAs (with 1 or more amino acids incorporated), which drop off the ribosome during protein synthesis, or as a result of ribosome stalling. In terms of biological role, catalyzes the release of premature peptidyl moieties from peptidyl-tRNA molecules trapped in stalled 50S ribosomal subunits, and thus maintains levels of free tRNAs and 50S ribosomes. The polypeptide is Peptidyl-tRNA hydrolase (Streptococcus pneumoniae (strain JJA)).